Consider the following 408-residue polypeptide: tRNA-specific 2-thiouridylase MnmA (408 aa).

ATP-binding positions include 27–34 (AMSGGVDS) and L53. The active-site Nucleophile is the C121. C121 and C222 are disulfide-bonded. G145 is an ATP binding site. Residues 172–174 (RDQ) are interaction with tRNA. Residue C222 is the Cysteine persulfide intermediate of the active site.

It belongs to the MnmA/TRMU family.

Its subcellular location is the cytoplasm. It catalyses the reaction S-sulfanyl-L-cysteinyl-[protein] + uridine(34) in tRNA + AH2 + ATP = 2-thiouridine(34) in tRNA + L-cysteinyl-[protein] + A + AMP + diphosphate + H(+). Its function is as follows. Catalyzes the 2-thiolation of uridine at the wobble position (U34) of tRNA, leading to the formation of s(2)U34. In Rhizobium johnstonii (strain DSM 114642 / LMG 32736 / 3841) (Rhizobium leguminosarum bv. viciae), this protein is tRNA-specific 2-thiouridylase MnmA.